Consider the following 281-residue polypeptide: Proteasome subunit beta (281 aa).

The propeptide at 1–53 is removed in mature form; by autocatalysis; that stretch reads MEANTRSTGRLPAAFLTPGSSSFMDFLSDQSPEMLPGNRSLPPLQGAVEAPHG. Residue T54 is the Nucleophile of the active site.

The protein belongs to the peptidase T1B family. In terms of assembly, the 20S proteasome core is composed of 14 alpha and 14 beta subunits that assemble into four stacked heptameric rings, resulting in a barrel-shaped structure. The two inner rings, each composed of seven catalytic beta subunits, are sandwiched by two outer rings, each composed of seven alpha subunits. The catalytic chamber with the active sites is on the inside of the barrel. Has a gated structure, the ends of the cylinder being occluded by the N-termini of the alpha-subunits. Is capped by the proteasome-associated ATPase, ARC.

It localises to the cytoplasm. The catalysed reaction is Cleavage of peptide bonds with very broad specificity.. Its pathway is protein degradation; proteasomal Pup-dependent pathway. The formation of the proteasomal ATPase ARC-20S proteasome complex, likely via the docking of the C-termini of ARC into the intersubunit pockets in the alpha-rings, may trigger opening of the gate for substrate entry. Interconversion between the open-gate and close-gate conformations leads to a dynamic regulation of the 20S proteasome proteolysis activity. In terms of biological role, component of the proteasome core, a large protease complex with broad specificity involved in protein degradation. The polypeptide is Proteasome subunit beta (Streptomyces griseus subsp. griseus (strain JCM 4626 / CBS 651.72 / NBRC 13350 / KCC S-0626 / ISP 5235)).